The primary structure comprises 292 residues: MKDIATPNRTKDIVEKYGFSFKKSLGQNFLIDTNVLNRIVDHAEIGSESGAIEIGPGIGALTEQLAKRAKKVVAFEIDQRLLPILDETLAPYGNVTVINKDVLKADVHEVFSEQFEEGQDVMVVANLPYYITTPILFKLLEEKLPVRGFVVMMQKEVGDRLAAKPGTKEYGSLSIAIQYYTEVETVMTVPRTVFVPQPNVDSAIIRLLKRPKPVVEVTDEIFFFEVVRASFAQRRKTLMNNLSNNLNGFPKDKELLDRILTEVGIDPKRRGETLSIEEFATLSNALVLHKLS.

N28, L30, G55, E76, D101, and N126 together coordinate S-adenosyl-L-methionine.

The protein belongs to the class I-like SAM-binding methyltransferase superfamily. rRNA adenine N(6)-methyltransferase family. RsmA subfamily.

It is found in the cytoplasm. The catalysed reaction is adenosine(1518)/adenosine(1519) in 16S rRNA + 4 S-adenosyl-L-methionine = N(6)-dimethyladenosine(1518)/N(6)-dimethyladenosine(1519) in 16S rRNA + 4 S-adenosyl-L-homocysteine + 4 H(+). Functionally, specifically dimethylates two adjacent adenosines (A1518 and A1519) in the loop of a conserved hairpin near the 3'-end of 16S rRNA in the 30S particle. May play a critical role in biogenesis of 30S subunits. The sequence is that of Ribosomal RNA small subunit methyltransferase A from Bacillus thuringiensis (strain Al Hakam).